The following is a 206-amino-acid chain: Pyridoxine/pyridoxamine 5'-phosphate oxidase (206 aa).

Residues 53-58, 68-69, lysine 75, and glutamine 97 each bind FMN; these read RMVLLK and YT. A substrate-binding site is contributed by lysine 58. The substrate site is built by tyrosine 115, arginine 119, and serine 123. FMN contacts are provided by residues 132–133 and tryptophan 177; that span reads QS. Residue 183–185 coordinates substrate; that stretch reads RLH. Residue arginine 187 participates in FMN binding.

The protein belongs to the pyridoxamine 5'-phosphate oxidase family. As to quaternary structure, homodimer. Requires FMN as cofactor.

It carries out the reaction pyridoxamine 5'-phosphate + O2 + H2O = pyridoxal 5'-phosphate + H2O2 + NH4(+). The catalysed reaction is pyridoxine 5'-phosphate + O2 = pyridoxal 5'-phosphate + H2O2. It participates in cofactor metabolism; pyridoxal 5'-phosphate salvage; pyridoxal 5'-phosphate from pyridoxamine 5'-phosphate: step 1/1. Its pathway is cofactor metabolism; pyridoxal 5'-phosphate salvage; pyridoxal 5'-phosphate from pyridoxine 5'-phosphate: step 1/1. Its function is as follows. Catalyzes the oxidation of either pyridoxine 5'-phosphate (PNP) or pyridoxamine 5'-phosphate (PMP) into pyridoxal 5'-phosphate (PLP). This is Pyridoxine/pyridoxamine 5'-phosphate oxidase from Sinorhizobium fredii (strain NBRC 101917 / NGR234).